Reading from the N-terminus, the 476-residue chain is Chromosomal replication initiator protein DnaA (476 aa).

The tract at residues 1–73 is domain I, interacts with DnaA modulators; the sequence is MTNSEQERWS…LSAWQAEMPE (73 aa). The tract at residues 73 to 132 is domain II; it reads EVHRIDLSVRTAMRCATPAKEAPAAVEARRPERSDAKPVSDARAPVMTPVAASHDALGGS. The tract at residues 92-115 is disordered; it reads KEAPAAVEARRPERSDAKPVSDAR. Over residues 99–112 the composition is skewed to basic and acidic residues; it reads EARRPERSDAKPVS. The tract at residues 133-355 is domain III, AAA+ region; sequence PLDPRLTFAS…GAINRLLAHS (223 aa). ATP-binding residues include G180, G182, K183, and T184. The segment at 356-476 is domain IV, binds dsDNA; the sequence is KLNNQPVTLD…VESLKRQLQD (121 aa).

It belongs to the DnaA family. Oligomerizes as a right-handed, spiral filament on DNA at oriC.

The protein localises to the cytoplasm. In terms of biological role, plays an essential role in the initiation and regulation of chromosomal replication. ATP-DnaA binds to the origin of replication (oriC) to initiate formation of the DNA replication initiation complex once per cell cycle. Binds the DnaA box (a 9 base pair repeat at the origin) and separates the double-stranded (ds)DNA. Forms a right-handed helical filament on oriC DNA; dsDNA binds to the exterior of the filament while single-stranded (ss)DNA is stabiized in the filament's interior. The ATP-DnaA-oriC complex binds and stabilizes one strand of the AT-rich DNA unwinding element (DUE), permitting loading of DNA polymerase. After initiation quickly degrades to an ADP-DnaA complex that is not apt for DNA replication. Binds acidic phospholipids. This Bradyrhizobium sp. (strain ORS 278) protein is Chromosomal replication initiator protein DnaA.